Reading from the N-terminus, the 299-residue chain is Urease accessory protein UreD (299 aa).

This sequence belongs to the UreD family. In terms of assembly, ureD, UreF and UreG form a complex that acts as a GTP-hydrolysis-dependent molecular chaperone, activating the urease apoprotein by helping to assemble the nickel containing metallocenter of UreC. The UreE protein probably delivers the nickel.

Its subcellular location is the cytoplasm. In terms of biological role, required for maturation of urease via the functional incorporation of the urease nickel metallocenter. The chain is Urease accessory protein UreD from Natronomonas pharaonis (strain ATCC 35678 / DSM 2160 / CIP 103997 / JCM 8858 / NBRC 14720 / NCIMB 2260 / Gabara) (Halobacterium pharaonis).